The following is a 494-amino-acid chain: Aspartyl/glutamyl-tRNA(Asn/Gln) amidotransferase subunit B (494 aa).

This sequence belongs to the GatB/GatE family. GatB subfamily. Heterotrimer of A, B and C subunits.

The catalysed reaction is L-glutamyl-tRNA(Gln) + L-glutamine + ATP + H2O = L-glutaminyl-tRNA(Gln) + L-glutamate + ADP + phosphate + H(+). It catalyses the reaction L-aspartyl-tRNA(Asn) + L-glutamine + ATP + H2O = L-asparaginyl-tRNA(Asn) + L-glutamate + ADP + phosphate + 2 H(+). In terms of biological role, allows the formation of correctly charged Asn-tRNA(Asn) or Gln-tRNA(Gln) through the transamidation of misacylated Asp-tRNA(Asn) or Glu-tRNA(Gln) in organisms which lack either or both of asparaginyl-tRNA or glutaminyl-tRNA synthetases. The reaction takes place in the presence of glutamine and ATP through an activated phospho-Asp-tRNA(Asn) or phospho-Glu-tRNA(Gln). The sequence is that of Aspartyl/glutamyl-tRNA(Asn/Gln) amidotransferase subunit B from Nitrobacter hamburgensis (strain DSM 10229 / NCIMB 13809 / X14).